The sequence spans 625 residues: Acetolactate synthase (625 aa).

The segment at 1 to 29 is disordered; that stretch reads MSAPTKPHARPQGAGNSVPNTVKPATQFP. Residues 14 to 29 show a composition bias toward polar residues; it reads AGNSVPNTVKPATQFP. Glu-92 contacts thiamine diphosphate. FAD contacts are provided by residues Arg-194, 300 to 321, and 343 to 362; these read HGTV…LGTR and DIDP…IVGD. The thiamine pyrophosphate binding stretch occupies residues 436–516; that stretch reads QHQMWAAQFI…IKVALINNGN (81 aa). Residues Asp-487 and Asn-514 each contribute to the Mg(2+) site.

Belongs to the TPP enzyme family. Mg(2+) is required as a cofactor. Thiamine diphosphate serves as cofactor.

The enzyme catalyses 2 pyruvate + H(+) = (2S)-2-acetolactate + CO2. It functions in the pathway amino-acid biosynthesis; L-isoleucine biosynthesis; L-isoleucine from 2-oxobutanoate: step 1/4. The protein operates within amino-acid biosynthesis; L-valine biosynthesis; L-valine from pyruvate: step 1/4. The sequence is that of Acetolactate synthase (ilvB) from Mycobacterium leprae (strain TN).